Reading from the N-terminus, the 118-residue chain is uncharacterized protein (118 aa).

Residues 21 to 38 form a helical membrane-spanning segment; the sequence is IVYFFFFFGLETFFSIIN.

The protein resides in the membrane. This is an uncharacterized protein from Dictyostelium discoideum (Social amoeba).